Here is a 148-residue protein sequence, read N- to C-terminus: MKTMRGLRNCSNDAVTLDLTVHPPPPPPLPPPAPSTVSSSTASTSLSFDEEETSESKIGRLISEHPVIIFTRFSSCCMCHVMKKLLSTVGVHPTVIEIDDGEIAYLAVEAAPVLFIGGTCVGGFESLVALHLSGQLIPRLVEVGALWA.

A disordered region spans residues 16–55 (TLDLTVHPPPPPPLPPPAPSTVSSSTASTSLSFDEEETSE). Positions 22–34 (HPPPPPPLPPPAP) are enriched in pro residues. Residues 35–47 (STVSSSTASTSLS) are compositionally biased toward low complexity. Residues 55–147 (ESKIGRLISE…PRLVEVGALW (93 aa)) enclose the Glutaredoxin domain. Residues Cys76 and Cys79 are joined by a disulfide bond.

The protein belongs to the glutaredoxin family. CC-type subfamily.

It localises to the cytoplasm. Its function is as follows. Has a glutathione-disulfide oxidoreductase activity in the presence of NADPH and glutathione reductase. Reduces low molecular weight disulfides and proteins. The chain is Glutaredoxin-C10 (GRXC10) from Arabidopsis thaliana (Mouse-ear cress).